The primary structure comprises 193 residues: dCTP deaminase, dUMP-forming (193 aa).

DCTP contacts are provided by residues 101–106 (KSSLGR), aspartate 119, 127–129 (TLE), glutamine 148, tyrosine 162, and glutamine 174. The Proton donor/acceptor role is filled by glutamate 129. Positions 161–184 (PYGSETTGSHYQGQRGPTPSRSYQ) are disordered.

It belongs to the dCTP deaminase family. As to quaternary structure, homotrimer.

The enzyme catalyses dCTP + 2 H2O = dUMP + NH4(+) + diphosphate. The protein operates within pyrimidine metabolism; dUMP biosynthesis; dUMP from dCTP: step 1/1. Bifunctional enzyme that catalyzes both the deamination of dCTP to dUTP and the hydrolysis of dUTP to dUMP without releasing the toxic dUTP intermediate. This Bifidobacterium animalis subsp. lactis (strain AD011) protein is dCTP deaminase, dUMP-forming.